Reading from the N-terminus, the 122-residue chain is Large ribosomal subunit protein uL14 (122 aa).

It belongs to the universal ribosomal protein uL14 family. Part of the 50S ribosomal subunit. Forms a cluster with proteins L3 and L19. In the 70S ribosome, L14 and L19 interact and together make contacts with the 16S rRNA in bridges B5 and B8.

Its function is as follows. Binds to 23S rRNA. Forms part of two intersubunit bridges in the 70S ribosome. This is Large ribosomal subunit protein uL14 from Cutibacterium acnes (strain DSM 16379 / KPA171202) (Propionibacterium acnes).